Here is a 355-residue protein sequence, read N- to C-terminus: UDP-N-acetylglucosamine--N-acetylmuramyl-(pentapeptide) pyrophosphoryl-undecaprenol N-acetylglucosamine transferase (355 aa).

UDP-N-acetyl-alpha-D-glucosamine contacts are provided by residues 14–16, N126, R162, S190, I243, 262–267, and Q287; these read TGG and ALTVSE.

It belongs to the glycosyltransferase 28 family. MurG subfamily.

The protein resides in the cell inner membrane. The catalysed reaction is di-trans,octa-cis-undecaprenyl diphospho-N-acetyl-alpha-D-muramoyl-L-alanyl-D-glutamyl-meso-2,6-diaminopimeloyl-D-alanyl-D-alanine + UDP-N-acetyl-alpha-D-glucosamine = di-trans,octa-cis-undecaprenyl diphospho-[N-acetyl-alpha-D-glucosaminyl-(1-&gt;4)]-N-acetyl-alpha-D-muramoyl-L-alanyl-D-glutamyl-meso-2,6-diaminopimeloyl-D-alanyl-D-alanine + UDP + H(+). The protein operates within cell wall biogenesis; peptidoglycan biosynthesis. Cell wall formation. Catalyzes the transfer of a GlcNAc subunit on undecaprenyl-pyrophosphoryl-MurNAc-pentapeptide (lipid intermediate I) to form undecaprenyl-pyrophosphoryl-MurNAc-(pentapeptide)GlcNAc (lipid intermediate II). This is UDP-N-acetylglucosamine--N-acetylmuramyl-(pentapeptide) pyrophosphoryl-undecaprenol N-acetylglucosamine transferase from Vibrio vulnificus (strain CMCP6).